A 124-amino-acid chain; its full sequence is Ribonuclease pancreatic (124 aa).

Over residues 1–13 (KETAAAKFERQHM) the composition is skewed to basic and acidic residues. Residues 1 to 24 (KETAAAKFERQHMDSSTSSASSSN) are disordered. Substrate contacts are provided by Lys-7 and Arg-10. His-12 (proton acceptor) is an active-site residue. 4 cysteine pairs are disulfide-bonded: Cys-26–Cys-84, Cys-40–Cys-95, Cys-58–Cys-110, and Cys-65–Cys-72. Substrate is bound by residues 41 to 45 (KPVBT), Lys-66, and Arg-85. His-119 acts as the Proton donor in catalysis.

Belongs to the pancreatic ribonuclease family. Monomer. Interacts with and forms tight 1:1 complexes with RNH1. Dimerization of two such complexes may occur. Interaction with RNH1 inhibits this protein. In terms of tissue distribution, pancreas.

Its subcellular location is the secreted. It catalyses the reaction an [RNA] containing cytidine + H2O = an [RNA]-3'-cytidine-3'-phosphate + a 5'-hydroxy-ribonucleotide-3'-[RNA].. It carries out the reaction an [RNA] containing uridine + H2O = an [RNA]-3'-uridine-3'-phosphate + a 5'-hydroxy-ribonucleotide-3'-[RNA].. Endonuclease that catalyzes the cleavage of RNA on the 3' side of pyrimidine nucleotides. Acts on single-stranded and double-stranded RNA. The protein is Ribonuclease pancreatic (RNASE1) of Boselaphus tragocamelus (Nilgai).